A 107-amino-acid chain; its full sequence is MMKVLVVVALLVTLISYSSSEGIDDLEADELLSLMADEQTRKECIPKHHECTSNKHGCCRGNFFKYKCQCTTVVTQDGEQTERCFCGTPPHHKAAELVVGFGKKIFG.

Positions 1-20 (MMKVLVVVALLVTLISYSSS) are cleaved as a signal peptide. A propeptide spanning residues 21–41 (EGIDDLEADELLSLMADEQTR) is cleaved from the precursor. 4 disulfide bridges follow: cysteine 44–cysteine 59, cysteine 51–cysteine 68, cysteine 58–cysteine 86, and cysteine 70–cysteine 84.

This sequence belongs to the neurotoxin 19 (CSTX) family. 04 (U1-Lctx) subfamily. In terms of tissue distribution, expressed by the venom gland.

It is found in the secreted. The chain is U1-lycotoxin-Ls1b from Lycosa singoriensis (Wolf spider).